Reading from the N-terminus, the 906-residue chain is MISTLLTKIIGSRNDRTLKALRKIVKQINAMEPQFEALSDAQLQAKTAEYRQRLEQGETLEQLLPEAFATVREASRRVFGMRHFDVQLIGGMVLNSNRIAEMKTGEGKTLTATLPAYLNALSGRGVHVVTVNDYLAKRDAEANRPLFAFLGMTVDCNVPGMDASQKRDAYAADITYGTNNEFGFDYLRDNMAFSPEQRVQRPLNYALVDEVDSVLIDEARTPLIISGPAEDSSELYIRVNKLIPLLVKQDKEDSEEYTGDGHYTVDEKNRQALLTENGQIFVEELLKKEGLLAEDDSLFSATNISLLHHVNAGLRAHTLFERNVDYIVQKDEIVIVDEHTGRTMPGRRWSDGLHQAVEAKEGVKIQNENQTLASITFQNYFRLYDKLAGMTGTADTEAFEFQQIYGLDTVVIPTNKPMVRKDMGDLVYLTANEKYAAIIEDIRGCVERGQPVLVGTVSIENSELLSGILTKENIPHKVLNAKFHAMEAEIVAQAGQTGAVTIATNMAGRGTDIVLGGNWQAEIAQLENPTEAQIAELKAAWQVRHDAVLAAGGLHIIGTERHESRRIDNQLRGRSGRQGDPGSSRFYLSMEDTLMRIFASDRVTGMMKKLGMEEGEAIEHPWVTKAIENAQRKVEGRNFDIRKSLLEFDDVANDQRKVVYEQRNELLDTSDISETIHVIRDDVYGAIIDEYIPPQSLEEMWDVPGLEARLKSDFALDLPLQQWLAEDDKLYEEKLRERILDEATKLYAHKEELVGKEVLRNFEKAVMLQTLDGLWKEHLAAMDHLRQGIHLRGYAQKNPKQEYKRESFDLFTQMLETLKRDVVSILSRVQVQERDVEAMEEQQRQQAEAAPRTYTHAAADNQLADDEAQAEAAPVTFVRDEQKVGRNDPCPCGSGKKYKHCHGQLT.

ATP-binding positions include glutamine 87, glycine 105–threonine 109, and aspartate 512. Positions valine 875–lysine 897 are disordered. 4 residues coordinate Zn(2+): cysteine 890, cysteine 892, cysteine 901, and histidine 902.

It belongs to the SecA family. In terms of assembly, monomer and homodimer. Part of the essential Sec protein translocation apparatus which comprises SecA, SecYEG and auxiliary proteins SecDF-YajC and YidC. Requires Zn(2+) as cofactor.

It is found in the cell inner membrane. It localises to the cytoplasm. The catalysed reaction is ATP + H2O + cellular proteinSide 1 = ADP + phosphate + cellular proteinSide 2.. Functionally, part of the Sec protein translocase complex. Interacts with the SecYEG preprotein conducting channel. Has a central role in coupling the hydrolysis of ATP to the transfer of proteins into and across the cell membrane, serving both as a receptor for the preprotein-SecB complex and as an ATP-driven molecular motor driving the stepwise translocation of polypeptide chains across the membrane. This chain is Protein translocase subunit SecA, found in Aeromonas hydrophila subsp. hydrophila (strain ATCC 7966 / DSM 30187 / BCRC 13018 / CCUG 14551 / JCM 1027 / KCTC 2358 / NCIMB 9240 / NCTC 8049).